The following is a 335-amino-acid chain: Fimbrial adhesin PapGIII (335 aa).

Positions 1–21 (MKKWLPAFLFLSLSGCNDALA) are cleaved as a signal peptide.

The protein belongs to the adhesin PapG family.

The protein resides in the secreted. The protein localises to the fimbrium. Functionally, tip adhesin component of type P pili that binds preferentially to Gal-alpha(1-4)-Gal-containing glycolipids such as globoside. This tip is common in E.coli strains that cause human cystitis, but rare in pyelonephritic isolates. The polypeptide is Fimbrial adhesin PapGIII (Escherichia coli).